The chain runs to 103 residues: Large ribosomal subunit protein bL21 (103 aa).

This sequence belongs to the bacterial ribosomal protein bL21 family. As to quaternary structure, part of the 50S ribosomal subunit. Contacts protein L20.

Functionally, this protein binds to 23S rRNA in the presence of protein L20. The protein is Large ribosomal subunit protein bL21 of Bordetella parapertussis (strain 12822 / ATCC BAA-587 / NCTC 13253).